The chain runs to 182 residues: MNVIGVVGLPASGKGEFSKIAEGLGIPVVVMGDVIRNAVKKAGLPPTDENLGAMANRLRAERGMDAIAILCVDAVKEQKARLVLIDGIRGDAEVRVFREHFPGFRLIAIETSFEKRLSRLCERKRSDDVGSAEGLLTRDKRELGWGLGNALQLADIRLNNDGSLEEFTARVTDLIHSMEREP.

Gly-8 to Gly-15 contributes to the ATP binding site.

This sequence belongs to the UPF0200 family.

The chain is UPF0200 protein Mboo_1593 from Methanoregula boonei (strain DSM 21154 / JCM 14090 / 6A8).